Here is an 89-residue protein sequence, read N- to C-terminus: MSITAERKAEVIKTNAKKAGDTGSPEVQVAILSERIANLTEHFKTHSKDNHSRRGLLKLVSTRRSLLDYVKKKDEARYRALLEKHNIRR.

Residues 1–11 are compositionally biased toward basic and acidic residues; it reads MSITAERKAEV. The segment at 1 to 24 is disordered; sequence MSITAERKAEVIKTNAKKAGDTGS.

It belongs to the universal ribosomal protein uS15 family. As to quaternary structure, part of the 30S ribosomal subunit. Forms a bridge to the 50S subunit in the 70S ribosome, contacting the 23S rRNA.

Functionally, one of the primary rRNA binding proteins, it binds directly to 16S rRNA where it helps nucleate assembly of the platform of the 30S subunit by binding and bridging several RNA helices of the 16S rRNA. In terms of biological role, forms an intersubunit bridge (bridge B4) with the 23S rRNA of the 50S subunit in the ribosome. In Afipia carboxidovorans (strain ATCC 49405 / DSM 1227 / KCTC 32145 / OM5) (Oligotropha carboxidovorans), this protein is Small ribosomal subunit protein uS15.